Here is a 187-residue protein sequence, read N- to C-terminus: Elongation factor P (187 aa).

Belongs to the elongation factor P family.

Its subcellular location is the cytoplasm. It functions in the pathway protein biosynthesis; polypeptide chain elongation. Its function is as follows. Involved in peptide bond synthesis. Stimulates efficient translation and peptide-bond synthesis on native or reconstituted 70S ribosomes in vitro. Probably functions indirectly by altering the affinity of the ribosome for aminoacyl-tRNA, thus increasing their reactivity as acceptors for peptidyl transferase. This is Elongation factor P from Mycobacterium avium (strain 104).